Here is a 592-residue protein sequence, read N- to C-terminus: Aspartate--tRNA(Asp/Asn) ligase (592 aa).

Glutamate 175 is a binding site for L-aspartate. The interval 199–202 is aspartate; the sequence is QLFK. An L-aspartate-binding site is contributed by arginine 221. Residues 221-223 and glutamine 230 each bind ATP; that span reads RDE. Residue histidine 450 coordinates L-aspartate. Glutamate 483 is an ATP binding site. Residue arginine 490 participates in L-aspartate binding. 535–538 is an ATP binding site; the sequence is GLDR.

The protein belongs to the class-II aminoacyl-tRNA synthetase family. Type 1 subfamily. As to quaternary structure, homodimer.

Its subcellular location is the cytoplasm. It catalyses the reaction tRNA(Asx) + L-aspartate + ATP = L-aspartyl-tRNA(Asx) + AMP + diphosphate. Functionally, aspartyl-tRNA synthetase with relaxed tRNA specificity since it is able to aspartylate not only its cognate tRNA(Asp) but also tRNA(Asn). Reaction proceeds in two steps: L-aspartate is first activated by ATP to form Asp-AMP and then transferred to the acceptor end of tRNA(Asp/Asn). In Acinetobacter baylyi (strain ATCC 33305 / BD413 / ADP1), this protein is Aspartate--tRNA(Asp/Asn) ligase.